The chain runs to 344 residues: MIKLEKISKIFDVSGKKLTALDNVSLHVPKGQICGVIGASGAGKSTLIRCVNLLETPSSGAVIVDGKDLTQLKNADLVHERRHIGMIFQHFNLLTSRTVFGNIALPLELENTPKEKIHQKVNELLALVGLTDKKDAYPSNLSGGQKQRVAIARALASEPKVLLCDEATSALDPATTQSILTLLKEINRTLGITILLITHEMEVVKRICDHVAVIDKGRLIEQGSVSEIFSNPQTQLAKEFIRSTFHISLPEEYMEKLTETPRNATSWPIVKFEFTGRTVDAPVLSQASKMFGVDLSILTSQIDYAGGVKFGFVIAEMEGDDEAITRTKTYLMEHNVKVEVLGYV.

Residues 2–241 enclose the ABC transporter domain; sequence IKLEKISKIF…PQTQLAKEFI (240 aa). Residue 38 to 45 coordinates ATP; sequence GASGAGKS.

It belongs to the ABC transporter superfamily. Methionine importer (TC 3.A.1.24) family. The complex is composed of two ATP-binding proteins (MetN), two transmembrane proteins (MetI) and a solute-binding protein (MetQ).

Its subcellular location is the cell inner membrane. It carries out the reaction L-methionine(out) + ATP + H2O = L-methionine(in) + ADP + phosphate + H(+). The catalysed reaction is D-methionine(out) + ATP + H2O = D-methionine(in) + ADP + phosphate + H(+). Part of the ABC transporter complex MetNIQ involved in methionine import. Responsible for energy coupling to the transport system. This is Methionine import ATP-binding protein MetN from Pasteurella multocida (strain Pm70).